A 383-amino-acid polypeptide reads, in one-letter code: Acetylornithine deacetylase (383 aa).

Position 80 (histidine 80) interacts with Zn(2+). The active site involves aspartate 82. Aspartate 112 serves as a coordination point for Zn(2+). The active site involves glutamate 144. Zn(2+)-binding residues include glutamate 145, glutamate 169, and histidine 355.

Belongs to the peptidase M20A family. ArgE subfamily. Homodimer. Zn(2+) serves as cofactor. Co(2+) is required as a cofactor. Requires glutathione as cofactor.

The protein localises to the cytoplasm. The catalysed reaction is N(2)-acetyl-L-ornithine + H2O = L-ornithine + acetate. The protein operates within amino-acid biosynthesis; L-arginine biosynthesis; L-ornithine from N(2)-acetyl-L-ornithine (linear): step 1/1. Functionally, catalyzes the hydrolysis of the amide bond of N(2)-acetylated L-amino acids. Cleaves the acetyl group from N-acetyl-L-ornithine to form L-ornithine, an intermediate in L-arginine biosynthesis pathway, and a branchpoint in the synthesis of polyamines. This chain is Acetylornithine deacetylase, found in Escherichia coli O157:H7.